The sequence spans 78 residues: DNA import protein CedA1 (78 aa).

2 consecutive transmembrane segments (helical) span residues 12 to 32 and 53 to 73; these read STVT…GWAL and AIIA…ISYI.

Forms a complex composed of CedA, CedA1 and CedA2.

Its subcellular location is the cell membrane. Its function is as follows. Part of the Ced system, which is involved in DNA import. The chain is DNA import protein CedA1 from Sulfolobus acidocaldarius (strain ATCC 33909 / DSM 639 / JCM 8929 / NBRC 15157 / NCIMB 11770).